We begin with the raw amino-acid sequence, 189 residues long: Chitin synthase 1 (189 aa).

This sequence belongs to the chitin synthase family. Class I subfamily.

It localises to the cell membrane. It carries out the reaction [(1-&gt;4)-N-acetyl-beta-D-glucosaminyl](n) + UDP-N-acetyl-alpha-D-glucosamine = [(1-&gt;4)-N-acetyl-beta-D-glucosaminyl](n+1) + UDP + H(+). Functionally, polymerizes chitin, a structural polymer of the cell wall and septum, by transferring the sugar moiety of UDP-GlcNAc to the non-reducing end of the growing chitin polymer. This Botryotinia fuckeliana (Noble rot fungus) protein is Chitin synthase 1 (chs1).